Consider the following 232-residue polypeptide: Noggin (232 aa).

The first 27 residues, 1–27 (MERCPSLGVTLYALVVVLGLRAAPAGG), serve as a signal peptide directing secretion. N-linked (GlcNAc...) asparagine glycosylation is present at N62. The disordered stretch occupies residues 77–99 (GFMATSPPEDRPGGGGGPAGGAE). Cystine bridges form between C155/C192, C178/C228, C184/C230, and C207/C215.

This sequence belongs to the noggin family. As to quaternary structure, homodimer. Interacts with GDF5; inhibits chondrocyte differentiation. As to expression, expressed in condensing cartilage and immature chondrocytes.

The protein resides in the secreted. Its function is as follows. Essential for cartilage morphogenesis and joint formation. Inhibitor of bone morphogenetic proteins (BMP) signaling which is required for growth and patterning of the neural tube and somite. Inhibits chondrocyte differentiation through its interaction with GDF5 and, probably, GDF6. The protein is Noggin (Nog) of Mus musculus (Mouse).